Reading from the N-terminus, the 251-residue chain is MSHFQVEDMLRAGVHFGHLARRWCPKMKPYIFMEKNGVHIIDLQKTAELANTALKALEAIAQTGREIMFVGTKKQAKVIIAEQATRSNMPYVSERWLGGMLTNFQTIRQSIRRMNSIDRMATDGTYDMITKKERLMLGREREKLMRILGGIATMNRLPAALFVVDIKKEHLAIKEARTLGIPVFAMVDTNCDPELVDYVIPANDDAIRSIQLMVKAVADTIINARELKVEQEVLATMDEAEVEGDKEDISE.

This sequence belongs to the universal ribosomal protein uS2 family.

In Chlorobium chlorochromatii (strain CaD3), this protein is Small ribosomal subunit protein uS2.